The primary structure comprises 1647 residues: Transcription elongation factor SPT6 homolog (1647 aa).

The disordered stretch occupies residues 1–209 (MARNAISDDE…SKKKKYRQGS (209 aa)). Residues 7–20 (SDDEEDHELEDDDG) show a composition bias toward acidic residues. Over residues 21 to 30 (EPVHGDPAEH) the composition is skewed to basic and acidic residues. Acidic residues predominate over residues 31 to 67 (DENDDEEDDDDVGNEYENDGFIVNDEDEEEEEEEDEE). Residues 103–114 (KFKKRQYKRLKK) show a composition bias toward basic residues. Basic and acidic residues predominate over residues 132 to 151 (DSRGGTRRSAEDKIKDRLFD). Acidic residues predominate over residues 152 to 191 (DVDVDDPPDDVGDEEDLVVEEDVVGSEDEMADFIVDEDDE). The S1 motif domain occupies 1103–1174 (GRIVQASVRR…QRYQVFLICK (72 aa)). Residues 1429–1647 (PMRSPADHGS…RKSDGGGGGW (219 aa)) form a disordered region. 2 repeat units span residues 1443 to 1444 (GW) and 1452 to 1453 (GW). The 12 X 2 AA repeats of [WG]-[GW] repeats stretch occupies residues 1443–1647 (GWGSSQSEGG…RKSDGGGGGW (205 aa)). The span at 1462–1471 (SGRGGEYRNG) shows a compositional bias: gly residues. The span at 1496 to 1507 (RRDDMNSDRQDG) shows a compositional bias: basic and acidic residues. 6 tandem repeats follow at residues 1511 to 1512 (WG), 1522 to 1523 (GW), 1530 to 1531 (GW), 1547 to 1548 (GW), 1563 to 1564 (WG), and 1574 to 1575 (GW). Composition is skewed to gly residues over residues 1519–1532 (ADGG…GGWG), 1539–1552 (KTGG…GSES), 1561–1579 (GSWG…GNDS), and 1588–1600 (GGFG…GGSD). Repeat copies occupy residues 1601-1602 (WG), 1615-1616 (GW), 1630-1631 (GW), and 1646-1647 (GW).

This sequence belongs to the SPT6 family. In terms of assembly, interacts (via N-terminus) with IWS1. Expressed in shoot apical meristem, leaf primordia, vasculature of young leaves, inflorescence meristem, floral meristem, young floral organs, developing ovules and anthers.

The protein localises to the nucleus. Functionally, transcription elongation factor that enhances the transcription elongation by RNA polymerase II (RNAPII). Plays an important role in regulating embryo apical and basal patterning during early embryogenesis, partly through negative regulation of the transcription factors PHABULOSA and PHAVOLUTA. The sequence is that of Transcription elongation factor SPT6 homolog from Arabidopsis thaliana (Mouse-ear cress).